We begin with the raw amino-acid sequence, 208 residues long: Small ribosomal subunit protein uS4A (208 aa).

Positions 98-164 (TRLDNVVYTL…AKIQSAIQAV (67 aa)) constitute an S4 RNA-binding domain.

Belongs to the universal ribosomal protein uS4 family. In terms of assembly, part of the 30S ribosomal subunit. Contacts protein S5. The interaction surface between S4 and S5 is involved in control of translational fidelity.

One of the primary rRNA binding proteins, it binds directly to 16S rRNA where it nucleates assembly of the body of the 30S subunit. In terms of biological role, with S5 and S12 plays an important role in translational accuracy. This chain is Small ribosomal subunit protein uS4A, found in Bdellovibrio bacteriovorus (strain ATCC 15356 / DSM 50701 / NCIMB 9529 / HD100).